A 257-amino-acid polypeptide reads, in one-letter code: Triosephosphate isomerase (257 aa).

Substrate-binding residues include asparagine 11 and lysine 13. The Electrophile role is filled by histidine 96. Glutamate 170 serves as the catalytic Proton acceptor.

This sequence belongs to the triosephosphate isomerase family. As to quaternary structure, homodimer.

The catalysed reaction is D-glyceraldehyde 3-phosphate = dihydroxyacetone phosphate. Its pathway is carbohydrate biosynthesis; gluconeogenesis. It functions in the pathway carbohydrate degradation; glycolysis; D-glyceraldehyde 3-phosphate from glycerone phosphate: step 1/1. The protein is Triosephosphate isomerase of Giardia intestinalis (Giardia lamblia).